Consider the following 125-residue polypeptide: Ribonuclease VapC19 (125 aa).

The PINc domain maps to 3–122; the sequence is LIDTTIAVDH…RHFPMFPDLQ (120 aa). Mg(2+) contacts are provided by D5 and D93.

Belongs to the PINc/VapC protein family. It depends on Mg(2+) as a cofactor.

Functionally, toxic component of a type II toxin-antitoxin (TA) system. An RNase. Its toxic effect is neutralized by coexpression with cognate antitoxin VapB19. This chain is Ribonuclease VapC19, found in Mycobacterium tuberculosis (strain CDC 1551 / Oshkosh).